Here is a 68-residue protein sequence, read N- to C-terminus: Small integral membrane protein 10-like protein 3 (68 aa).

Expressed specifically in salivary glands (at protein level).

This chain is Small integral membrane protein 10-like protein 3, found in Mus musculus (Mouse).